The chain runs to 525 residues: MAAMVLAATRLLRGSGSWGRSRPRFGDPAYRRFSSGGAYPNIPLSSPLPGVPKPVFATVDGQEKFETKVTTLDNGLRVASQNKFGQFCTVGILINSGSRYEAKYLSGIAHFLEKLAFSSTERFDSKDEILLTLEKHGGICDCQTSRDTTMYAVSADSKGLDTVVGLLADVVLHPRLTDEEIEMARMAVQFELEDLNMRPDPEPLLTEMVHEAAYRENTVGLHRFCPAENVGKMDRDVLHAYLRNYYTPDRMVLAGVGVEHAQLVECARKYLLGTCPAWGTGAAVHVDRSVAQYTGGIVKLERDMSNVSLGPTPFPELTHIMIGLESCSFLEGDFIPFAVLNMMMGGGGSFSAGGPGKGMFTRLYLNVLNRHHWMYNATSYHHSYEDTGLLCIHASADPRQVREMVEIVTREFVLMAGTVDVVELERAKTQLTSMLMMNLEARPVIFEDVGRQVLATRSRKLPHELCALIRDVKPEDIKRVASKMLRGKPAVAALGDLSELPAYEHVQAALASRDGRLPRVYRLFR.

A mitochondrion-targeting transit peptide spans 1–33; the sequence is MAAMVLAATRLLRGSGSWGRSRPRFGDPAYRRF. N6-succinyllysine is present on K64. N6-acetyllysine is present on K299.

Belongs to the peptidase M16 family. As to quaternary structure, heterodimer of PMPCA (alpha) and PMPCB (beta) subunits, forming the mitochondrial processing protease (MPP) in which PMPCA is involved in substrate recognition and binding and PMPCB is the catalytic subunit.

It is found in the mitochondrion matrix. The protein resides in the mitochondrion inner membrane. Functionally, substrate recognition and binding subunit of the essential mitochondrial processing protease (MPP), which cleaves the mitochondrial sequence off newly imported precursors proteins. This Bos taurus (Bovine) protein is Mitochondrial-processing peptidase subunit alpha (PMPCA).